The sequence spans 2335 residues: uncharacterized protein (2335 aa).

A run of 6 helical transmembrane segments spans residues 114–134 (FMIG…AHII), 148–167 (FISG…SIVF), 172–194 (VVIP…IVKY), 214–234 (IFFL…PFLS), 255–275 (EFGF…LSLL), and 307–327 (FVNL…IAYF). A compositionally biased stretch (polar residues) spans 1043-1052 (ATSESISFNQ). Positions 1043–1064 (ATSESISFNQTKEKSNSTLGRL) are disordered. 2 coiled-coil regions span residues 1174–1202 (VTLK…MKEA) and 1417–1447 (KKRE…EKIV). The span at 1458–1471 (QTSQLTKNSFNPSR) shows a compositional bias: polar residues. The segment at 1458–1479 (QTSQLTKNSFNPSRQKTDKNLE) is disordered. A helical transmembrane segment spans residues 2086 to 2106 (VWFPSGSLSQQVLPVHYIYVF). The interval 2200 to 2222 (KQEKRILKSKQRRKITDSKQSTE) is disordered.

It belongs to the ycf78 family.

It localises to the plastid. It is found in the chloroplast membrane. This is an uncharacterized protein from Tetradesmus obliquus (Green alga).